The primary structure comprises 586 residues: RNA-directed RNA polymerase subunit beta (586 aa).

The RdRp catalytic domain maps to 259–391; that stretch reads VRAYSGSCSN…TNEKKTFFDG (133 aa). Positions 274, 359, and 360 each coordinate Mg(2+).

Homodimer; the replicase complex can dimerize. Part of the viral RNA-dependent RNA polymerase complex, the other subunits are the host ribosomal protein S1, EF-Tu and EF-Ts. S1 is needed for the initiation of genomic RNA (+)-strand replication. Requires Mg(2+) as cofactor.

The catalysed reaction is RNA(n) + a ribonucleoside 5'-triphosphate = RNA(n+1) + diphosphate. In terms of biological role, this is the catalytic subunit of the viral RNA-dependent RNA polymerase complex. This complex is involved in viral RNA replication that produces (+)-stranded genomes via a complementary, (-)-stranded intermediate. Binds RNA cooperatively with the host ribosomal protein S1. The sequence is that of RNA-directed RNA polymerase subunit beta from Escherichia coli.